The following is an 84-amino-acid chain: Small ribosomal subunit protein uS17 (84 aa).

Belongs to the universal ribosomal protein uS17 family. As to quaternary structure, part of the 30S ribosomal subunit.

Its function is as follows. One of the primary rRNA binding proteins, it binds specifically to the 5'-end of 16S ribosomal RNA. The polypeptide is Small ribosomal subunit protein uS17 (Caldanaerobacter subterraneus subsp. tengcongensis (strain DSM 15242 / JCM 11007 / NBRC 100824 / MB4) (Thermoanaerobacter tengcongensis)).